Reading from the N-terminus, the 147-residue chain is Microsomal glutathione S-transferase 2 (147 aa).

The next 3 membrane-spanning stretches (helical) occupy residues 6 to 26, 62 to 82, and 107 to 127; these read SLLA…AWRV, VFIV…AACL, and GFRL…LGVA.

In terms of assembly, homotrimer.

Its subcellular location is the endoplasmic reticulum membrane. The protein resides in the microsome membrane. It catalyses the reaction RX + glutathione = an S-substituted glutathione + a halide anion + H(+). The enzyme catalyses 1-chloro-2,4-dinitrobenzene + glutathione = 2,4-dinitrophenyl-S-glutathione + chloride + H(+). The catalysed reaction is leukotriene C4 = leukotriene A4 + glutathione. It carries out the reaction (5S)-hydroperoxy-(6E,8Z,11Z,14Z)-eicosatetraenoate + 2 glutathione = (5S)-hydroxy-(6E,8Z,11Z,14Z)-eicosatetraenoate + glutathione disulfide + H2O. With respect to regulation, each monomer binds on GSH molecule but only one subunit is catalytically active. Its function is as follows. Catalyzes several different glutathione-dependent reactions. Catalyzes the glutathione-dependent reduction of lipid hydroperoxides, such as 5-HPETE. Has glutathione transferase activity, toward xenobiotic electrophiles, such as 1-chloro-2, 4-dinitrobenzene (CDNB). Also catalyzes the conjugation of leukotriene A4 with reduced glutathione to form leukotriene C4 (LTC4). Involved in oxidative DNA damage induced by ER stress and anticancer agents by activating LTC4 biosynthetic machinery in nonimmune cells. This Mus musculus (Mouse) protein is Microsomal glutathione S-transferase 2.